A 175-amino-acid chain; its full sequence is Small ribosomal subunit protein uS5 (175 aa).

The region spanning 11-74 (LSEVLVDVNR…QAAKKRMMKV (64 aa)) is the S5 DRBM domain.

It belongs to the universal ribosomal protein uS5 family. As to quaternary structure, part of the 30S ribosomal subunit. Contacts proteins S4 and S8.

Functionally, with S4 and S12 plays an important role in translational accuracy. Located at the back of the 30S subunit body where it stabilizes the conformation of the head with respect to the body. This is Small ribosomal subunit protein uS5 from Rickettsia typhi (strain ATCC VR-144 / Wilmington).